A 240-amino-acid polypeptide reads, in one-letter code: MQIFPAIDLKNGQCVRLFQGDFSKKTVVNEDPIAQAKAFATDGATYLHIVDLDGALEGRPINLEIIQRMKKAAKIPVQVGGGIRSMAQVDYYLESGIDRVIIGSAALTNPDFLRAAVQKYGAKIVAGIDAKNGFVATRGWLDVSQVSYLDLAKRMEKVGVETIIYTDISRDGTLTGPNLEQMANLKEHVKVSLIASGGVSSRADLEALAQLGLYGAIAGKALYNHDISMSDIVEVEQIAY.

The Proton acceptor role is filled by Asp-8. Catalysis depends on Asp-129, which acts as the Proton donor.

It belongs to the HisA/HisF family.

Its subcellular location is the cytoplasm. It catalyses the reaction 1-(5-phospho-beta-D-ribosyl)-5-[(5-phospho-beta-D-ribosylamino)methylideneamino]imidazole-4-carboxamide = 5-[(5-phospho-1-deoxy-D-ribulos-1-ylimino)methylamino]-1-(5-phospho-beta-D-ribosyl)imidazole-4-carboxamide. It functions in the pathway amino-acid biosynthesis; L-histidine biosynthesis; L-histidine from 5-phospho-alpha-D-ribose 1-diphosphate: step 4/9. The protein is 1-(5-phosphoribosyl)-5-[(5-phosphoribosylamino)methylideneamino] imidazole-4-carboxamide isomerase of Listeria monocytogenes serotype 4b (strain F2365).